A 561-amino-acid chain; its full sequence is MRLWKSMAWGILLWHSQSGALCPAWPPARAAEEIARLQQQLADWNDIYWKQGVSAVDDSVYDQLSARLVQWQRCVGQDVSSTPVSPPLNGTTMHPVAHTGVRKLADRQAVEQWMRGRSELWVQPKVDGVAVTLVYQNGKLTRAISRGNGLQGEDWTPKIRLIPSIPQTTQGALANAVLQGEIFLQREGHIQQRMGGMNARSKVAGMLMRQDNASALNSLGIFIWAWPDGPANMPERLSQLAKAGFSLTKKYSLVVKDASEVERARQSWLTSALPFVTDGVVIRMAKEPASQYWRPGQGDWLAAWKYPPVAQVAQVSAIQFSVGKSGKITVVASLVPVILDDKRVQRVNIGSVKRWEAWDIAPGDQILVSLAGQGIPRLDEVVWRSRERSKPVPPDSHFNSLTCFYASATCQEQFISRLVWLGSRSALGLDGMGEASWRALHQTHRFEHIFSWLTLTSAQIANTPGFAKGKSEQIWRQFNLARRQSFTRWIMAMDIPLTQAALQASGDRSWEQLLMRTEQHWRQLPATGERRAGRVIDWRNNPQIKTLSRWLAAQHIPGFGS.

K125 functions as the N6-AMP-lysine intermediate in the catalytic mechanism.

It belongs to the NAD-dependent DNA ligase family. LigB subfamily.

It catalyses the reaction NAD(+) + (deoxyribonucleotide)n-3'-hydroxyl + 5'-phospho-(deoxyribonucleotide)m = (deoxyribonucleotide)n+m + AMP + beta-nicotinamide D-nucleotide.. Its function is as follows. Catalyzes the formation of phosphodiester linkages between 5'-phosphoryl and 3'-hydroxyl groups in double-stranded DNA using NAD as a coenzyme and as the energy source for the reaction. This chain is DNA ligase B, found in Salmonella agona (strain SL483).